A 268-amino-acid polypeptide reads, in one-letter code: MPRSFLVKKHFNASKKPNYSELDTHTVIISPYLYESYSMPVIPQPEILSSGAYSPITVWTTAAPFHAQLPNGLSPLSGYSSSLGRVSPPPPSDTSSKDHSGSESPISDEEERLQSKLSDPHAIEAEKFQCNLCNKTYSTFSGLAKHKQLHCDAQSRKSFSCKYCDKEYVSLGALKMHIRTHTLPCVCKICGKAFSRPWLLQGHIRTHTGEKPFSCPHCNRAFADRSNLRAHLQTHSDVKKYQCKNCSKTFSRMSLLHKHEESGCCVAH.

The tract at residues 1–20 is SNAG domain; the sequence is MPRSFLVKKHFNASKKPNYS. Residues 80–117 are disordered; the sequence is SSSLGRVSPPPPSDTSSKDHSGSESPISDEEERLQSKL. 4 C2H2-type zinc fingers span residues 128-150, 159-181, 185-207, and 213-235; these read FQCNLCNKTYSTFSGLAKHKQLH, FSCKYCDKEYVSLGALKMHIRTH, CVCKICGKAFSRPWLLQGHIRTH, and FSCPHCNRAFADRSNLRAHLQTH. The C2H2-type 5; atypical zinc-finger motif lies at 241 to 264; sequence YQCKNCSKTFSRMSLLHKHEESGC.

Belongs to the snail C2H2-type zinc-finger protein family. In terms of assembly, interacts (via SNAG domain) with LIMD1 (via LIM domains), WTIP (via LIM domains) and AJUBA (via LIM domains). Interacts (via zinc fingers) with KPNA2, KPNB1, and TNPO1. May interact (via zinc fingers) with IPO7. In terms of processing, phosphorylated by GSK3B. Once phosphorylated, it becomes a target for ubiquitination. Ubiquitinated by the SCF(FBXO11) complex; ubiquitination requires previous GSK3B-mediated SNAI2 phosphorylation. In terms of tissue distribution, expressed in most adult human tissues, including spleen, thymus, prostate, testis, ovary, small intestine, colon, heart, brain, placenta, lung, liver, skeletal muscle, kidney and pancreas. Not detected in peripheral blood leukocyte. Expressed in the dermis and in all layers of the epidermis, with high levels of expression in the basal layers (at protein level). Expressed in osteoblasts (at protein level). Expressed in mesenchymal stem cells (at protein level). Expressed in breast tumor cells (at protein level).

The protein resides in the nucleus. Its subcellular location is the cytoplasm. Transcriptional repressor that modulates both activator-dependent and basal transcription. Involved in the generation and migration of neural crest cells. Plays a role in mediating RAF1-induced transcriptional repression of the TJ protein, occludin (OCLN) and subsequent oncogenic transformation of epithelial cells. Represses BRCA2 expression by binding to its E2-box-containing silencer and recruiting CTBP1 and HDAC1 in breast cells. In epidermal keratinocytes, binds to the E-box in ITGA3 promoter and represses its transcription. Involved in the regulation of ITGB1 and ITGB4 expression and cell adhesion and proliferation in epidermal keratinocytes. Binds to E-box2 domain of BSG and activates its expression during TGFB1-induced epithelial-mesenchymal transition (EMT) in hepatocytes. Represses E-Cadherin/CDH1 transcription via E-box elements. Involved in osteoblast maturation. Binds to RUNX2 and SOC9 promoters and may act as a positive and negative transcription regulator, respectively, in osteoblasts. Binds to CXCL12 promoter via E-box regions in mesenchymal stem cells and osteoblasts. Plays an essential role in TWIST1-induced EMT and its ability to promote invasion and metastasis. The protein is Zinc finger protein SNAI2 (SNAI2) of Homo sapiens (Human).